The chain runs to 456 residues: MNYFILILPILPYLYGPAVCSEDETRLVKTLFTGYNKVVRPVSHFKDPVVVTVGLQLIQLISVDEVNQIVTSNVRLKQQWKDVHLQWNPDDYGGIRKIRIPSTDLWKPDLVLYNNADGDFAIVHETKVLLEHTGMITWTPPAIFKSYCEIVVLHFPFDLQNCSMKLGTWTYDGNLVIINPDSDRPDLSNFMESGEWVMKDYRSWKHWVYYACCPDTPYLDITYHFLLLRLPLYFIVNVIIPCMLFSFLTGLVFYLPTDSGEKMTLSISVLLSLTVFLLVIVELIPSTSSAVPLIGKYMLFTMIFVIASIIITVIVINTHHRSPSTHIMPAWVRKIFIDTIPNMMFFSTMKRPSQERQEKRLFPADFDISDISGKPMPASVTYHSPITKNPDVRSAIEGVKYIADTMKSDEESNNAAEEWKFVAMVLDHILLCVFMAVCIIGTLGVFAGRLIELSML.

An N-terminal signal peptide occupies residues 1 to 20; sequence MNYFILILPILPYLYGPAVC. Topologically, residues 21-230 are extracellular; the sequence is SEDETRLVKT…ITYHFLLLRL (210 aa). Disulfide bonds link C148-C162 and C212-C213. An N-linked (GlcNAc...) asparagine glycan is attached at N161. Helical transmembrane passes span 231–255, 263–281, and 297–316; these read PLYF…VFYL, MTLS…LVIV, and YMLF…VIVI. Over 317-428 the chain is Cytoplasmic; the sequence is NTHHRSPSTH…WKFVAMVLDH (112 aa). A helical transmembrane segment spans residues 429–447; that stretch reads ILLCVFMAVCIIGTLGVFA.

It belongs to the ligand-gated ion channel (TC 1.A.9) family. Acetylcholine receptor (TC 1.A.9.1) subfamily. Alpha-1/CHRNA1 sub-subfamily. As to quaternary structure, one of the alpha chains that assemble within the acetylcholine receptor, a pentamer of two alpha chains, a beta, a delta, and a gamma or epsilon chains.

Its subcellular location is the postsynaptic cell membrane. The protein localises to the cell membrane. The enzyme catalyses K(+)(in) = K(+)(out). It carries out the reaction Na(+)(in) = Na(+)(out). Functionally, upon acetylcholine binding, the AChR responds by an extensive change in conformation that affects all subunits and leads to opening of an ion-conducting channel across the plasma membrane. This Danio rerio (Zebrafish) protein is Acetylcholine receptor subunit alpha (chrna1).